Reading from the N-terminus, the 310-residue chain is Ribosomal RNA small subunit methyltransferase H (310 aa).

Residues 33–35 (AGH), Asp53, Phe79, Asp100, and Gln107 contribute to the S-adenosyl-L-methionine site.

It belongs to the methyltransferase superfamily. RsmH family.

The protein localises to the cytoplasm. The enzyme catalyses cytidine(1402) in 16S rRNA + S-adenosyl-L-methionine = N(4)-methylcytidine(1402) in 16S rRNA + S-adenosyl-L-homocysteine + H(+). Its function is as follows. Specifically methylates the N4 position of cytidine in position 1402 (C1402) of 16S rRNA. The protein is Ribosomal RNA small subunit methyltransferase H of Clostridium tetani (strain Massachusetts / E88).